A 92-amino-acid chain; its full sequence is Costars family protein ST45-2 (92 aa).

At M1 the chain carries N-acetylmethionine.

This sequence belongs to the costars family.

The chain is Costars family protein ST45-2 from Eutrema halophilum (Salt cress).